The chain runs to 160 residues: 6,7-dimethyl-8-ribityllumazine synthase (160 aa).

Residues tryptophan 28, 59 to 61, and 81 to 83 each bind 5-amino-6-(D-ribitylamino)uracil; these read ALE and CVI. (2S)-2-hydroxy-3-oxobutyl phosphate is bound at residue 86–87; that stretch reads ET. The active-site Proton donor is the histidine 89. Residue asparagine 114 participates in 5-amino-6-(D-ribitylamino)uracil binding. Residue arginine 128 participates in (2S)-2-hydroxy-3-oxobutyl phosphate binding.

This sequence belongs to the DMRL synthase family.

It catalyses the reaction (2S)-2-hydroxy-3-oxobutyl phosphate + 5-amino-6-(D-ribitylamino)uracil = 6,7-dimethyl-8-(1-D-ribityl)lumazine + phosphate + 2 H2O + H(+). Its pathway is cofactor biosynthesis; riboflavin biosynthesis; riboflavin from 2-hydroxy-3-oxobutyl phosphate and 5-amino-6-(D-ribitylamino)uracil: step 1/2. In terms of biological role, catalyzes the formation of 6,7-dimethyl-8-ribityllumazine by condensation of 5-amino-6-(D-ribitylamino)uracil with 3,4-dihydroxy-2-butanone 4-phosphate. This is the penultimate step in the biosynthesis of riboflavin. The chain is 6,7-dimethyl-8-ribityllumazine synthase from Corynebacterium urealyticum (strain ATCC 43042 / DSM 7109).